The sequence spans 214 residues: Probable transaldolase (214 aa).

Lysine 83 (schiff-base intermediate with substrate) is an active-site residue.

This sequence belongs to the transaldolase family. Type 3B subfamily.

It localises to the cytoplasm. It catalyses the reaction D-sedoheptulose 7-phosphate + D-glyceraldehyde 3-phosphate = D-erythrose 4-phosphate + beta-D-fructose 6-phosphate. It functions in the pathway carbohydrate degradation; pentose phosphate pathway; D-glyceraldehyde 3-phosphate and beta-D-fructose 6-phosphate from D-ribose 5-phosphate and D-xylulose 5-phosphate (non-oxidative stage): step 2/3. In terms of biological role, transaldolase is important for the balance of metabolites in the pentose-phosphate pathway. The protein is Probable transaldolase of Geobacter metallireducens (strain ATCC 53774 / DSM 7210 / GS-15).